A 221-amino-acid chain; its full sequence is Endo-1,4-beta-xylanase 11A (221 aa).

Residues 1-18 (MKFATVLAFATAAGAAFA) form the signal peptide. A GH11 domain is found at 23–220 (SSETTEAGQL…GTGSASMSVS (198 aa)). The Nucleophile role is filled by Glu-111. N-linked (GlcNAc...) asparagine glycosylation occurs at Asn-117. The active-site Proton donor is the Glu-207.

This sequence belongs to the glycosyl hydrolase 11 (cellulase G) family.

The protein resides in the secreted. The enzyme catalyses Endohydrolysis of (1-&gt;4)-beta-D-xylosidic linkages in xylans.. It participates in glycan degradation; xylan degradation. In terms of biological role, endo-1,4-beta-xylanase involved in the hydrolysis of xylan, a major structural heterogeneous polysaccharide found in plant biomass representing the second most abundant polysaccharide in the biosphere, after cellulose. The chain is Endo-1,4-beta-xylanase 11A (XYN11A) from Mycosarcoma maydis (Corn smut fungus).